The following is a 526-amino-acid chain: MSFLQEVGKRRTFAIISHPDAGKTTITEKVLLFGNAIQKAGTVKGRGSNQHAKSDWMEMEKERGISVTTSVMQFPFNDCLVNLLDTPGHEDFSEDTYRTLTAVDSCLMVIDAAKGVEDRTRKLMEVTRLRDTPIVTFMNKLDREVRDPMEVLDEVESELGMACAPISWPIGCGKEFKGVYHIHRDETILYESGHGHEIQEVRTIKGLDNPELDAAVGSDLAESVREELELVMGACPEFDHELFLAGELTPVYFGTALGNFGVDHMLEGLTDWAPAPQTRQANERDVVATEDKFSGFVFKIQANMDPKHRDRIAFMRIVSGTYTQGMKMNHVRTGKNVSISDAVTFMAGDRSRAETAYAGDIIGLHNHGTIQIGDTFTQGESLKFSGIPNFAPELFRRIRLKDPLKQKQLLKGLVQLSEEGAVQVFRPLQNNDLIVGAVGVLQFDVVVARLKAEYNVEAIYEGVSVATARWVDCTDGKKMDEFQRKNQANLALDGGDNLTYIAPTMVNLNLASERFPDVQFRATREH.

The tr-type G domain occupies 8–277 (GKRRTFAIIS…GLTDWAPAPQ (270 aa)). Residues 17 to 24 (SHPDAGKT), 85 to 89 (DTPGH), and 139 to 142 (NKLD) contribute to the GTP site.

This sequence belongs to the TRAFAC class translation factor GTPase superfamily. Classic translation factor GTPase family. PrfC subfamily.

The protein localises to the cytoplasm. Functionally, increases the formation of ribosomal termination complexes and stimulates activities of RF-1 and RF-2. It binds guanine nucleotides and has strong preference for UGA stop codons. It may interact directly with the ribosome. The stimulation of RF-1 and RF-2 is significantly reduced by GTP and GDP, but not by GMP. In Aliivibrio fischeri (strain MJ11) (Vibrio fischeri), this protein is Peptide chain release factor 3.